A 449-amino-acid chain; its full sequence is Phosphoglucosamine mutase (449 aa).

The active-site Phosphoserine intermediate is Ser-101. Residues Ser-101, Asp-240, Asp-242, and Asp-244 each contribute to the Mg(2+) site. Ser-101 carries the post-translational modification Phosphoserine.

The protein belongs to the phosphohexose mutase family. It depends on Mg(2+) as a cofactor. Post-translationally, activated by phosphorylation.

The catalysed reaction is alpha-D-glucosamine 1-phosphate = D-glucosamine 6-phosphate. Its function is as follows. Catalyzes the conversion of glucosamine-6-phosphate to glucosamine-1-phosphate. This Streptococcus suis (strain 98HAH33) protein is Phosphoglucosamine mutase.